Here is a 114-residue protein sequence, read N- to C-terminus: Phosphorelay protein LuxU (114 aa).

The HPt domain occupies 19–114 (GSDNVPVLLD…TRDAYRSWTN (96 aa)). Phosphohistidine is present on histidine 58.

Monomer.

In terms of biological role, phosphorelay protein which receives sensory signals from LuxN and LuxP and transmits them to LuxO, at low cell density. LuxN and LuxP transfer a phosphoryl group to LuxU on His-58 and this phosphoryl group is further transferred to LuxO. At high cell density, as LuxU could function to establish an equilibrium between the aspartyl-phosphate of LuxN and the aspartyl-phosphate of LuxO, LuxU transfers phosphate from LuxO to LuxN (and probably LuxP) and finally phosphate is drained from the system. The polypeptide is Phosphorelay protein LuxU (luxU) (Vibrio harveyi (Beneckea harveyi)).